Here is a 344-residue protein sequence, read N- to C-terminus: Probable magnesium transporter NIPA9 (344 aa).

The Cytoplasmic segment spans residues 1–46 (MWESICLTLAATAGNNIGKVLQKKGTIILPPLSLKLKVLRAYAENK). 2 helical membrane passes run 47–67 (PWALGFLMDIVGALLMLRALS) and 68–88 (LAPVSVVQPVSGCGLAILSVF). The Cytoplasmic segment spans residues 89–98 (SHFYLKEVMN). Residues 99–119 (VFDWIGITVAGIGTIGVGAGG) traverse the membrane as a helical segment. Residues 120 to 125 (EEQEAS) lie on the Extracellular side of the membrane. A helical membrane pass occupies residues 126 to 146 (LISVFQLLWLALVVAILFVLL). Over 147–166 (NAWLHIFKRQRREQELGEYE) the chain is Cytoplasmic. The helical transmembrane segment at 167 to 187 (VVEEIIYGLESGILFGMASVV) threads the bilayer. Topologically, residues 188-191 (SKMG) are extracellular. A helical membrane pass occupies residues 192–212 (FVFVEQGFSTMFIPMCISISI). The Cytoplasmic portion of the chain corresponds to 213–231 (CCSGTGFFYQTRGLKHGRA). Residues 232 to 252 (IVVSTCAAVASIVTGVVAGMF) form a helical membrane-spanning segment. Residues 253–265 (ALGEKLPTSPSGR) lie on the Extracellular side of the membrane. Residues 266–286 (LLLLLGWLLIMLGVVLLVTSS) traverse the membrane as a helical segment. Topologically, residues 287–344 (RLIRHLPRSFRRSRQTSLERGFNIRRTTSHTPKDTNPSAVIQAATLHHLLSSPSKDKD) are cytoplasmic.

The protein belongs to the NIPA (TC 2.A.7) family. Homodimer.

The protein localises to the cell membrane. It is found in the early endosome. Acts as a Mg(2+) transporter. Can also transport other divalent cations such as Fe(2+), Sr(2+), Ba(2+), Mn(2+) and Co(2+) but to a much less extent than Mg(2+). This Arabidopsis thaliana (Mouse-ear cress) protein is Probable magnesium transporter NIPA9.